The following is a 411-amino-acid chain: Secretion apparatus protein BsaZ (411 aa).

Helical transmembrane passes span 28–48 (IVALIVIATGALAAPALVDLT), 80–100 (IAAPFVLLCAAAGALPSLVQS), 137–157 (ALLYVGVFALTVRVFADLYHA), and 175–195 (IVLTVRLVLLFLLCALPVLIL). Positions 341-411 (AANRGGPPPE…APARTGDQNA (71 aa)) are disordered. The segment covering 370-404 (DACADNAFPDDAPPGAAAPNAGSPDSPAPDGGAPA) has biased composition (low complexity).

The protein belongs to the type III secretion exporter family.

It localises to the cell membrane. Functionally, part of the bsa type III secretion system, is involved in the intracellular replication of invading bacteria inside the host cell. Probably necessary for the lysis of the vacuole membrane and escape into the host cell cytoplasm. This is Secretion apparatus protein BsaZ (bsaZ) from Burkholderia mallei (strain NCTC 10247).